The following is a 340-amino-acid chain: MSTPRAAASLAKKAALVALAVLAAALATAARAEQCGAQAGGARCPNCLCCSRWGWCGTTSDFCGDGCQSQCSGCGPTPTPTPPSPSDGVGSIVPRDLFERLLLHRNDGACPARGFYTYEAFLAAAAAFPAFGGTGNTETRKREVAAFLGQTSHETTGGWPTAPDGPFSWGYCFKQEQNPPSDYCQPSPEWPCAPGRKYYGRGPIQLSFNFNYGPAGRAIGVDLLSNPDLVATDATVSFKTALWFWMTPQGNKPSSHDVITGRWAPSPADAAAGRAPGYGVITNIVNGGLECGHGPDDRVANRIGFYQRYCGAFGIGTGGNLDCYNQRPFNSGSSVGLAEQ.

The first 32 residues, 1–32, serve as a signal peptide directing secretion; that stretch reads MSTPRAAASLAKKAALVALAVLAAALATAARA. The region spanning 33 to 73 is the Chitin-binding type-1 domain; the sequence is EQCGAQAGGARCPNCLCCSRWGWCGTTSDFCGDGCQSQCSG. 8 cysteine pairs are disulfide-bonded: Cys-35-Cys-50, Cys-44-Cys-56, Cys-47-Cys-74, Cys-49-Cys-63, Cys-67-Cys-71, Cys-110-Cys-172, Cys-184-Cys-192, and Cys-291-Cys-323. Glu-154 acts as the Proton donor in catalysis.

Belongs to the glycosyl hydrolase 19 family. Chitinase class I subfamily. As to expression, expressed in roots, sheaths and meristems.

The enzyme catalyses Random endo-hydrolysis of N-acetyl-beta-D-glucosaminide (1-&gt;4)-beta-linkages in chitin and chitodextrins.. Hydrolyzes chitin and plays a role in defense against fungal pathogens containing chitin. Its overexpression confers enhanced resistance to sheath blight pathogen (R.solani). The chain is Chitinase 2 (Cht2) from Oryza sativa subsp. japonica (Rice).